The primary structure comprises 89 residues: Small ribosomal subunit protein uS15 (89 aa).

This sequence belongs to the universal ribosomal protein uS15 family. In terms of assembly, part of the 30S ribosomal subunit. Forms a bridge to the 50S subunit in the 70S ribosome, contacting the 23S rRNA.

Its function is as follows. One of the primary rRNA binding proteins, it binds directly to 16S rRNA where it helps nucleate assembly of the platform of the 30S subunit by binding and bridging several RNA helices of the 16S rRNA. In terms of biological role, forms an intersubunit bridge (bridge B4) with the 23S rRNA of the 50S subunit in the ribosome. The protein is Small ribosomal subunit protein uS15 of Lactobacillus gasseri (strain ATCC 33323 / DSM 20243 / BCRC 14619 / CIP 102991 / JCM 1131 / KCTC 3163 / NCIMB 11718 / NCTC 13722 / AM63).